A 425-amino-acid chain; its full sequence is Histone-binding protein RBBP4 (425 aa).

A2 carries the N-acetylalanine modification. K4 is modified (N6-acetyllysine; alternate). A Glycyl lysine isopeptide (Lys-Gly) (interchain with G-Cter in SUMO2); alternate cross-link involves residue K4. K4 is covalently cross-linked (Glycyl lysine isopeptide (Lys-Gly) (interchain with G-Cter in ubiquitin); alternate). WD repeat units follow at residues 32-125 (YDLV…NHEG), 126-175 (EVNR…RLRG), 176-223 (HQKE…KTIF), 225-270 (GHTA…HSVD), 271-314 (AHTA…HSFE), 315-371 (SHKD…FIHG), and 372-404 (GHTA…VWQM). At S110 the chain carries Phosphoserine. The residue at position 160 (K160) is an N6-acetyllysine; alternate. K160 is covalently cross-linked (Glycyl lysine isopeptide (Lys-Gly) (interchain with G-Cter in SUMO2); alternate). The residue at position 355 (S355) is a Phosphoserine.

This sequence belongs to the WD repeat RBAP46/RBAP48/MSI1 family. In terms of assembly, binds directly to helix 1 of the histone fold of histone H4, a region that is not accessible when H4 is in chromatin. Subunit of the chromatin assembly factor 1 (CAF-1) complex, which is composed of RBBP4, CHAF1B and CHAF1A. Subunit of the core histone deacetylase (HDAC) complex, which is composed of HDAC1, HDAC2, RBBP4 and RBBP7. The core HDAC complex associates with SIN3A, ARID4B/SAP180, SAP18, SAP30, SAP130, SUDS3/SAP45 and possibly ARID4A/RBP1 and ING1 to form the SIN3 HDAC complex. Component of the nucleosome remodeling and deacetylase (NuRD) repressor complex, composed of core proteins MTA1, MTA2, MTA3, RBBP4, RBBP7, HDAC1, HDAC2, MBD2, MBD3, and peripherally associated proteins CDK2AP1, CDK2AP2, GATAD2A, GATAD2B, CHD3, CHD4 and CHD5. The exact stoichiometry of the NuRD complex is unknown, and some subunits such as MBD2 and MBD3, GATAD2A and GATAD2B, and CHD3, CHD4 and CHD5 define mutually exclusive NuRD complexes. Interacts with ZNF512B; the interaction is direct and may play a role in repressing gene expression. The NuRD complex may also interact with MBD3L1 and MBD3L2. Component of the PRC2 complex, which consists of the core subunits EED, EZH1 or EZH2, SUZ12, and RBBP4, and various combinations of accessory subunits including AEBP2, JARID2, PHF19, MTF2 and EPOP. Forms a monomeric PRC2.2 (class 2) complex consisting of at least SUZ12, RBBP4, AEBP2 and JARID2. Forms a dimeric PRC2.1 (class 1, PRC-PCL) complex consisting of at least SUZ12, RBBP4, and PHF19; PHF19 stabilizes the dimeric structure which enhances PRC2 interaction with chromatin. Component of the NURF-1 ISWI chromatin remodeling complex (also called the nucleosome-remodeling factor (NURF) complex) at least composed of SMARCA1 (isoform 2), BPTF, RBBP4 and RBBP7. Within the complex interacts with isoform 2 of SMARCA1. Component of the BPFT-SMARCA1 complex at least composed of SMARCA1 (isoform 1), BPFT, RBBP4 and RBBP7; the complex is catalytically inactive and does not remodel chromatin. Within the complex interacts with isoform 1 of SMARCA1. Interacts with the ISWI chromatin remodeling complex component SMARCA5; the interaction is direct. Interacts with the viral protein-binding domain of the retinoblastoma protein (RB1). Component of the DREAM complex (also named LINC complex) at least composed of E2F4, E2F5, LIN9, LIN37, LIN52, LIN54, MYBL1, MYBL2, RBL1, RBL2, RBBP4, TFDP1 and TFDP2. The complex exists in quiescent cells where it represses cell cycle-dependent genes. It dissociates in S phase when LIN9, LIN37, LIN52 and LIN54 form a subcomplex that binds to MYBL2. Found in a complex composed of at least SINHCAF, SIN3A, HDAC1, SAP30, RBBP4, OGT and TET1. Interacts with ZNF827; the interaction is direct and recruits RBBP4 to telomeres. Interacts with MTA1; the interaction is direct and mutually exclusive with binding histone H4. Interacts with ARMC12 (via ARM domains). Interacts with BRCA1. Interacts with CDK2AP1. Interacts with CREBBP, and this interaction may be enhanced by the binding of phosphorylated CREB1 to CREBBP. Interacts with ERCC6. Interacts with HDAC7. Interacts with PHF6. Interacts with PWWP2B. Interacts with SPEN/MINT. Interacts with SUV39H1.

The protein localises to the nucleus. It is found in the chromosome. It localises to the telomere. In terms of biological role, core histone-binding subunit that may target chromatin assembly factors, chromatin remodeling factors and histone deacetylases to their histone substrates in a manner that is regulated by nucleosomal DNA. Component of the chromatin assembly factor 1 (CAF-1) complex, which is required for chromatin assembly following DNA replication and DNA repair. Component of the core histone deacetylase (HDAC) complex, which promotes histone deacetylation and consequent transcriptional repression. Component of the nucleosome remodeling and histone deacetylase complex (the NuRD complex), which promotes transcriptional repression by histone deacetylation and nucleosome remodeling. Component of the PRC2 complex, which promotes repression of homeotic genes during development. Component of the NURF (nucleosome remodeling factor) complex. This chain is Histone-binding protein RBBP4 (RBBP4), found in Pongo abelii (Sumatran orangutan).